Reading from the N-terminus, the 439-residue chain is Elongation factor Tu, mitochondrial (439 aa).

The region spanning 51–246 is the tr-type G domain; that stretch reads KPHVNIGTIG…AVDSYITLPE (196 aa). Positions 60–67 are G1; it reads GHVDHGKT. GTP is bound at residue 60-67; that stretch reads GHVDHGKT. The interval 101-105 is G2; sequence GITIS. The interval 122 to 125 is G3; sequence DCPG. GTP is bound by residues 122 to 126 and 177 to 180; these read DCPGH and NKVD. Residues 177 to 180 form a G4 region; the sequence is NKVD. The segment at 214–216 is G5; sequence SAL.

This sequence belongs to the TRAFAC class translation factor GTPase superfamily. Classic translation factor GTPase family. EF-Tu/EF-1A subfamily.

Its subcellular location is the mitochondrion. In terms of biological role, this protein promotes the GTP-dependent binding of aminoacyl-tRNA to the A-site of ribosomes during protein biosynthesis. This is Elongation factor Tu, mitochondrial (tuf1) from Schizosaccharomyces pombe (strain 972 / ATCC 24843) (Fission yeast).